A 309-amino-acid polypeptide reads, in one-letter code: tRNA dimethylallyltransferase (309 aa).

An ATP-binding site is contributed by 10–17 (GPTAVGKT). Residue 12-17 (TAVGKT) participates in substrate binding. The interval 35–38 (DSMQ) is interaction with substrate tRNA.

The protein belongs to the IPP transferase family. In terms of assembly, monomer. It depends on Mg(2+) as a cofactor.

The catalysed reaction is adenosine(37) in tRNA + dimethylallyl diphosphate = N(6)-dimethylallyladenosine(37) in tRNA + diphosphate. In terms of biological role, catalyzes the transfer of a dimethylallyl group onto the adenine at position 37 in tRNAs that read codons beginning with uridine, leading to the formation of N6-(dimethylallyl)adenosine (i(6)A). This is tRNA dimethylallyltransferase from Clostridium botulinum (strain Eklund 17B / Type B).